Consider the following 611-residue polypeptide: Elongation factor 4 1 (611 aa).

The tr-type G domain occupies 11-193 (QHIRNFSIVA…QIVHKIPAPQ (183 aa)). Residues 23-28 (DHGKST) and 140-143 (NKID) contribute to the GTP site.

Belongs to the TRAFAC class translation factor GTPase superfamily. Classic translation factor GTPase family. LepA subfamily.

It is found in the cell membrane. It carries out the reaction GTP + H2O = GDP + phosphate + H(+). Required for accurate and efficient protein synthesis under certain stress conditions. May act as a fidelity factor of the translation reaction, by catalyzing a one-codon backward translocation of tRNAs on improperly translocated ribosomes. Back-translocation proceeds from a post-translocation (POST) complex to a pre-translocation (PRE) complex, thus giving elongation factor G a second chance to translocate the tRNAs correctly. Binds to ribosomes in a GTP-dependent manner. The chain is Elongation factor 4 1 from Lactiplantibacillus plantarum (strain ATCC BAA-793 / NCIMB 8826 / WCFS1) (Lactobacillus plantarum).